The primary structure comprises 253 residues: Small ribosomal subunit protein cS22 (253 aa).

A chloroplast-targeting transit peptide spans 1–56 (MATFLTNVVSIKPTIFSFQSESFTPLHTRVNVFSSKPFPSLAGTFSRSSRTRFIPY). 2 RRM domains span residues 76-154 (RRVY…ITEK) and 177-253 (YKVY…VNKA).

It belongs to the chloroplast-specific ribosomal protein cS22 family. Component of the chloroplast small ribosomal subunit (SSU). Mature 70S chloroplast ribosomes of higher plants consist of a small (30S) and a large (50S) subunit. The 30S small subunit contains 1 molecule of ribosomal RNA (16S rRNA) and 24 different proteins. The 50S large subunit contains 3 rRNA molecules (23S, 5S and 4.5S rRNA) and 33 different proteins. As to expression, expressed constitutively in roots, stems, flower buds, flowers and leaves.

Its subcellular location is the plastid. The protein resides in the chloroplast. Its function is as follows. Component of the chloroplast ribosome (chloro-ribosome), a dedicated translation machinery responsible for the synthesis of chloroplast genome-encoded proteins, including proteins of the transcription and translation machinery and components of the photosynthetic apparatus. May have a role in the recruitment of stored chloroplast mRNAs for active protein synthesis. Bind single strand DNA (ssDNA) and RNA in vitro. Exhibits RNA chaperone activity. Negatively regulates resistance responses to abiotic stresses during seed germination (e.g. salt, dehydration, and low temperature) and seedling growth (e.g. salt). The polypeptide is Small ribosomal subunit protein cS22 (Arabidopsis thaliana (Mouse-ear cress)).